The primary structure comprises 700 residues: MSSVRRPSKLLSEKQSDKLAQIIQNFFLKAAHVIFHFRVAFPSVVLQPDDSYGAMGDSFAQSKYNNRWFNLDLGNYEIPRTELSLWRNKDILSLPPLVLETFLDLRGLSSNQTLMLDDVIVKTSKKSEIVLERWLIEFDLSTFDNEVMEFPSIYKKIIILFRSLYLLAGLLPSYKLRDKLVKSKSKNSAIHVSCRILDGSKPITSKGRIGLSKKLLSEDEHTSSKKLQPILTPIGALRVSVSYRTNCNFQVSDNEEALSSQFMLDHLPSVRTNYDSDGNSLTSPMDYLQNRVSSASIHLSDQSPRRRSSTRSVQLFKVGSINSSSSPPPGATQSNQSVSSFSTSKPIPVTLNKTNSSASLVPILRQNRDSLPKSIGSMVQNQMQETGHQVSSNSRRFSSSFGSRFRTVSSRNNSLDGQLVVANQPFSTPNNPILHNFRSRNKSPSVSSTELGPSSSIYMDDDLDSFMKMLDSKPDLRFPSNSPSVYEDPLANFKTFQKSNDFLTLEQQQHGSPSSNQIMIHSQSQTSQSQVFKRTVSSDRSRRGSVSSNYSPSSQALRPGVSAPMVTPSVTYGKFHASSGSPSNSSLAQYLRHNSSPPASATAVATVHNSLRRLTSSSQRTNTNSTNSSTRPVNPELLKLKSFNEDVFESDDDEHDEHSPRSTDTKSRNTGPSSGHAEDDEDDLLFAMSDMTLAKNNQEF.

Positions 319 to 352 are disordered; the sequence is GSINSSSSPPPGATQSNQSVSSFSTSKPIPVTLN. Low complexity predominate over residues 332–344; it reads TQSNQSVSSFSTS. Residues 399–407 are ATG17-binding; the sequence is SSFGSRFRT. The tract at residues 428 to 487 is ATG1-binding; sequence TPNNPILHNFRSRNKSPSVSSTELGPSSSIYMDDDLDSFMKMLDSKPDLRFPSNSPSVYE. The segment covering 506–532 has biased composition (polar residues); sequence EQQQHGSPSSNQIMIHSQSQTSQSQVF. Disordered regions lie at residues 506–562, 576–637, and 649–700; these read EQQQ…PGVS, HASS…NPEL, and ESDD…NQEF. Positions 595-631 are enriched in low complexity; sequence SSPPASATAVATVHNSLRRLTSSSQRTNTNSTNSSTR. Positions 656 to 667 are enriched in basic and acidic residues; it reads DEHSPRSTDTKS.

Belongs to the ATG13 family. Fungi subfamily. In terms of assembly, hypophosphorylated form interacts with ATG1 to form the ATG1-ATG13 kinase complex. The ATG1-ATG13 complex interacts with the ATG17-ATG29-ATG31 complex through direct interaction with ATG17. Interacts with VAC8.

It is found in the cytoplasm. Its subcellular location is the preautophagosomal structure. Its function is as follows. Activates the ATG1 kinase in a nutritional condition dependent manner through the TOR pathway, leading to autophagy. Involved in ATG9 and ATG23 cycling through the pre-autophagosomal structure. Also involved in cytoplasm to vacuole transport (Cvt) and more specifically in Cvt vesicle formation. Seems to play a role in the switching machinery regulating the conversion between the Cvt pathway and autophagy. Finally, ATG13 is also required for glycogen storage during stationary phase. In terms of biological role, acts as a negative regulator of xylose alcoholic fermentation, a role that is not related to autophagy. This Ogataea parapolymorpha (strain ATCC 26012 / BCRC 20466 / JCM 22074 / NRRL Y-7560 / DL-1) (Yeast) protein is Autophagy-related protein 13.